The chain runs to 168 residues: DAZ-associated protein 2 (168 aa).

The segment covering 1-13 has biased composition (low complexity); the sequence is MNSKGQYPTQPTY. The interval 1 to 25 is disordered; sequence MNSKGQYPTQPTYPVQPPGNPVYPQ. Positions 39 to 42 match the PPAY motif; sequence PPAY. A Phosphoserine modification is found at S77.

Interacts with SOX6. Interacts with DAZ1 and DAZL. Interacts with IL17RB. May interact with FAM168B. Interacts with INCA1. Interacts with EIF4G1 and EIF4G2. Interacts (via PPAY motif) with NEDD4 (via WW domains). Interacts with transcription factor TCF4; the interaction results in localization of DAZAP2 to the nucleus. Interacts with transcription factors TCF7 and TCF7L1. Interacts with transcription factor LEF1. Interacts with serine/threonine-protein kinase HIPK2; the interaction results in phosphorylation of DAZAP2 which causes localization of DAZAP2 to the nucleus, reduces interaction of DAZAP2 with HIPK2 and prevents DAZAP2-dependent degradation of HIPK2. Interacts with ubiquitin ligase SIAH1; the interaction is decreased following phosphorylation of DAZAP2 by HIPK2. Interacts with TP53; the interaction is triggered by DNA damage. Post-translationally, ubiquitinated by SMURF2, leading to proteasomal degradation. Ubiquitinated by NEDD4, leading to proteasomal degradation. Following DNA damage, phosphorylated by HIPK2 which promotes DAZAP2 localization to the nucleus, reduces interaction of DAZAP2 with HIPK2 and SIAH1, and prevents DAZAP2-dependent ubiquitination of HIPK2 by E3 ubiquitin-protein ligase SIAH1 and subsequent HIPK2 proteasomal degradation.

The protein resides in the cytoplasm. Its subcellular location is the nucleus. It is found in the nucleus speckle. It localises to the nuclear body. The protein localises to the stress granule. Its function is as follows. In unstressed cells, promotes SIAH1-mediated polyubiquitination and degradation of the serine/threonine-protein kinase HIPK2, probably by acting as a loading factor that potentiates complex formation between HIPK2 and ubiquitin ligase SIAH1. In response to DNA damage, localizes to the nucleus following phosphorylation by HIPK2 and modulates the expression of a subset of TP53/p53 target genes by binding to TP53 at target gene promoters. This limits the expression of a number of cell death-mediating TP53 target genes, reducing DNA damage-induced cell death. Enhances the binding of transcription factor TCF7L2/TCF4, a Wnt signaling pathway effector, to the promoters of target genes. Plays a role in stress granule formation. This is DAZ-associated protein 2 from Macaca fascicularis (Crab-eating macaque).